Here is a 123-residue protein sequence, read N- to C-terminus: Fluoride-specific ion channel FluC 2 (123 aa).

3 consecutive transmembrane segments (helical) span residues 30–50, 68–88, and 93–113; these read FPLP…FVAG, VGFI…VLLL, and WPLA…AVWV. Na(+) contacts are provided by G72 and T75.

It belongs to the fluoride channel Fluc/FEX (TC 1.A.43) family.

It is found in the cell membrane. It catalyses the reaction fluoride(in) = fluoride(out). Its activity is regulated as follows. Na(+) is not transported, but it plays an essential structural role and its presence is essential for fluoride channel function. Functionally, fluoride-specific ion channel. Important for reducing fluoride concentration in the cell, thus reducing its toxicity. The polypeptide is Fluoride-specific ion channel FluC 2 (Symbiobacterium thermophilum (strain DSM 24528 / JCM 14929 / IAM 14863 / T)).